The primary structure comprises 518 residues: Bifunctional methyltransferase (518 aa).

The interval 1–300 is hemK; the sequence is MQYSIKQILS…SHNRVIEISP (300 aa). An RF MTase region spans residues 1-302; that stretch reads MQYSIKQILS…NRVIEISPIN (302 aa). S-adenosyl-L-methionine is bound by residues 140–144, Asp-163, Trp-192, Asn-207, Glu-347, Glu-372, Asn-399, and Asp-421; that span reads GTGSG. 207–210 is a substrate binding site; sequence NPPY. The tRNA (guanine-N(7)-)-methyltransferase stretch occupies residues 301–518; that stretch reads INLNRSYARR…MILQHALTDH (218 aa). The interval 305–518 is tRNA MTase; sequence RSYARRIGKS…MILQHALTDH (214 aa). Asp-421 is an active-site residue. Substrate-binding residues include Lys-425 and Asp-457.

It in the C-terminal section; belongs to the class I-like SAM-binding methyltransferase superfamily. TrmB family. This sequence in the N-terminal section; belongs to the protein N5-glutamine methyltransferase family. PrmC subfamily.

The enzyme catalyses L-glutaminyl-[peptide chain release factor] + S-adenosyl-L-methionine = N(5)-methyl-L-glutaminyl-[peptide chain release factor] + S-adenosyl-L-homocysteine + H(+). The catalysed reaction is guanosine(46) in tRNA + S-adenosyl-L-methionine = N(7)-methylguanosine(46) in tRNA + S-adenosyl-L-homocysteine. Functionally, methylates the class 1 translation termination release factors RF1/PrfA and RF2/PrfB on the glutamine residue of the universally conserved GGQ motif. Its function is as follows. Catalyzes the formation of N(7)-methylguanine at position 46 (m7G46) in tRNA. The protein is Bifunctional methyltransferase (prmC/trmB) of Rickettsia prowazekii (strain Madrid E).